The primary structure comprises 236 residues: Small ribosomal subunit protein uS2c (236 aa).

It belongs to the universal ribosomal protein uS2 family.

It is found in the plastid. It localises to the chloroplast. The polypeptide is Small ribosomal subunit protein uS2c (rps2) (Coffea arabica (Arabian coffee)).